Here is a 25-residue protein sequence, read N- to C-terminus: Caerin-1.3 (25 aa).

Leu25 carries the post-translational modification Leucine amide.

As to expression, expressed by the skin parotoid and/or rostral glands.

The protein localises to the secreted. Antibacterial peptide, that adopts an alpha helical conformation which can disrupt bacterial membranes. Each caerin displays a different antimicrobial specificity. The polypeptide is Caerin-1.3 (Ranoidea caerulea (Green tree frog)).